A 199-amino-acid chain; its full sequence is MSSMEKHLFNLKFAAKELQRNSKKCDKEEKAEKVKVKKAIQKGNMEVARIHAENAIRQKNQSVNFLRMSARVDAVAARVQTAVTMNQVTKSMAGVVKGMDATLKSMNLEKISGLMEKFERQFETLDVQTAQMEDSMSSTTTLTTPQGQVDTLMMEMADEAGLDLNMELPQGQTGSVGTSVASAEQDELSQRLAKLRDQV.

Coiled coils occupy residues 10-30 (NLKF…KEEK) and 178-199 (TSVA…RDQV). The disordered stretch occupies residues 167–199 (ELPQGQTGSVGTSVASAEQDELSQRLAKLRDQV). Residues 170–182 (QGQTGSVGTSVAS) show a composition bias toward polar residues. An MIT-interacting motif motif is present at residues 186 to 196 (DELSQRLAKLR).

The protein belongs to the SNF7 family. Probable peripherally associated component of the endosomal sorting required for transport complex III (ESCRT-III).

The protein resides in the cytoplasm. It localises to the cytosol. The protein localises to the endosome. Its subcellular location is the late endosome membrane. In terms of biological role, probable peripherally associated component of the endosomal sorting required for transport complex III (ESCRT-III) which is involved in multivesicular bodies (MVBs) formation and sorting of endosomal cargo proteins into MVBs. MVBs contain intraluminal vesicles (ILVs) that are generated by invagination and scission from the limiting membrane of the endosome and mostly are delivered to lysosomes enabling degradation of membrane proteins, such as stimulated growth factor receptors, lysosomal enzymes and lipids. This Danio rerio (Zebrafish) protein is Charged multivesicular body protein 1b (chmp1b).